The sequence spans 404 residues: Type I restriction enzyme EcoR124I/EcoR124II specificity subunit (404 aa).

The interval 1-153 (MSEMSYLEKL…PIPCPDNPEK (153 aa)) is target-recognition domain 1. Residues 154–199 (SLAIQSEIVRILDKFTALTAELTAELNMRKKQYNYYRDQLLSFKEG) form a conserved region 1 region. Positions 200–349 (EVEWKTLGEI…KLFSFKIPVP (150 aa)) are target-recognition domain 2. The segment at 350–404 (NINEQQRIVEILDKFDTLTNSITEGLPREIELRQKQYEYYRDLLFSFPKPETVSN) is conserved region 2.

It belongs to the type-I restriction system S methylase family. The type I restriction/modification system is composed of three polypeptides R, M and S; the restriction enzyme has stoichiometry R(2)M(2)S(1) while the methyltransferase is M(2)S(1). There is an equilibrium between R(2)M(2)S(1) and R(1)M(2)S(1); the latter is methylation and translocation proficient but restriction deficient. In terms of assembly, (Microbial infection) Holoenenzyme interacts with Escherichia phage T7 protein Ocr; this interaction leads to the inhibition of the restriction activity, but may still allow methylation and translocation.

The specificity (S) subunit of a type I restriction enzyme; this subunit dictates DNA sequence specificity. The presence or absence of a 4-residue repeat changes the sequence specificity; a third copy of TAEL inserted at position 179-180 changes the recognition site from 5'-GAAN(6)RTCG-3' (for EcoR124I) to 5'-GAAN(7)RTCG-3' (for EcoR124II). The M and S subunits together form a methyltransferase (MTase) that methylates A-3 on the top and bottom strand of the sequence 5'-GAAN(7)RTCG-3'. In the presence of the R subunit the complex can also act as an endonuclease, binding to the same target sequence but cutting the DNA some distance from this site. Whether the DNA is cut or modified depends on the methylation state of the target sequence. When the target site is unmodified, the DNA is cut. When the target site is hemimethylated, the complex acts as a maintenance MTase modifying the DNA so that both strands become methylated. After locating a non-methylated recognition site, the enzyme complex serves as a molecular motor that translocates DNA in an ATP-dependent manner until a collision occurs that triggers cleavage. The R(1)M(2)S(1) complex translocates an average of 555 bp/second on nicked DNA; the R(2)M(2)S(1) complex translocates at double that speed. The 2 R subunit motors are independent and track along the helical pitch of the DNA, inducing positive supercoiling ahead of themselves. This chain is Type I restriction enzyme EcoR124I/EcoR124II specificity subunit (hsdS), found in Escherichia coli.